The following is a 281-amino-acid chain: Stomatin-4 (281 aa).

A helical transmembrane segment spans residues 28-48 (WIITIISYLVVLFTLPLSAFF).

The protein belongs to the band 7/mec-2 family.

It localises to the membrane. The chain is Stomatin-4 (sto-4) from Caenorhabditis elegans.